Reading from the N-terminus, the 806-residue chain is GPI ethanolamine phosphate transferase 2 (806 aa).

N-linked (GlcNAc...) asparagine glycosylation is found at Asn70, Asn184, and Asn242. 3 helical membrane passes run 396–416, 425–445, and 451–471; these read MLFL…YCYI, SVLM…SSFV, and IWWW…PSCT. Residue Asn488 is glycosylated (N-linked (GlcNAc...) asparagine). 8 helical membrane-spanning segments follow: residues 508–528, 532–552, 593–613, 624–644, 664–684, 706–726, 745–765, and 782–804; these read PSIK…DGFT, LLSI…TCWA, LFFK…VVFA, LFTI…FLVF, CEMF…QFGG, IYVV…YWSL, LSSM…CICM, and LLGW…LLMV.

The protein belongs to the PIGG/PIGN/PIGO family. PIGG subfamily.

Its subcellular location is the endoplasmic reticulum membrane. It participates in glycolipid biosynthesis; glycosylphosphatidylinositol-anchor biosynthesis. Ethanolamine phosphate transferase involved in glycosylphosphatidylinositol-anchor biosynthesis. Transfers ethanolamine phosphate to the GPI second mannose. The polypeptide is GPI ethanolamine phosphate transferase 2 (LAS21) (Eremothecium gossypii (strain ATCC 10895 / CBS 109.51 / FGSC 9923 / NRRL Y-1056) (Yeast)).